Here is a 2067-residue protein sequence, read N- to C-terminus: Separin (2067 aa).

Disordered stretches follow at residues 51–91, 140–167, 1316–1363, and 1449–1478; these read RTAR…AQDV, KKDA…TDNE, DLEE…SVEA, and LEPK…TKAQ. Residues 55–86 are compositionally biased toward low complexity; the sequence is GTKATATNATASSRAKTTRTKSTSTSTTRTKT. 2 stretches are compositionally biased toward low complexity: residues 1333 to 1354 and 1449 to 1461; these read TRQP…ARST and LEPK…SSKS. One can recognise a Peptidase C50 domain in the interval 1880–1975; sequence RRNGTYILNP…SGTLTEAGEY (96 aa). Residue Cys-1964 is part of the active site.

It is found in the nucleus. The enzyme catalyses All bonds known to be hydrolyzed by this endopeptidase have arginine in P1 and an acidic residue in P4. P6 is often occupied by an acidic residue or by a hydroxy-amino-acid residue, the phosphorylation of which enhances cleavage.. Required for nuclear division. Could function in the mitotic spindle. This chain is Separin (bimB), found in Emericella nidulans (strain FGSC A4 / ATCC 38163 / CBS 112.46 / NRRL 194 / M139) (Aspergillus nidulans).